The primary structure comprises 83 residues: Cytochrome b559 subunit alpha (83 aa).

Residues 21–35 traverse the membrane as a helical segment; it reads VIHSITIPSLFIAGW. Heme is bound at residue His23.

The protein belongs to the PsbE/PsbF family. As to quaternary structure, heterodimer of an alpha subunit and a beta subunit. PSII is composed of 1 copy each of membrane proteins PsbA, PsbB, PsbC, PsbD, PsbE, PsbF, PsbH, PsbI, PsbJ, PsbK, PsbL, PsbM, PsbT, PsbX, PsbY, PsbZ, Psb30/Ycf12, at least 3 peripheral proteins of the oxygen-evolving complex and a large number of cofactors. It forms dimeric complexes. Requires heme b as cofactor.

The protein localises to the plastid. Its subcellular location is the chloroplast thylakoid membrane. This b-type cytochrome is tightly associated with the reaction center of photosystem II (PSII). PSII is a light-driven water:plastoquinone oxidoreductase that uses light energy to abstract electrons from H(2)O, generating O(2) and a proton gradient subsequently used for ATP formation. It consists of a core antenna complex that captures photons, and an electron transfer chain that converts photonic excitation into a charge separation. This chain is Cytochrome b559 subunit alpha, found in Staurastrum punctulatum (Green alga).